A 250-amino-acid polypeptide reads, in one-letter code: MAGHSKWANIKRQKARVDAQKGKIFARLSRAIIIAARHGGGDPAGNFQLRSAIEKAKAAGIPSENIERAIAKGTGTLDSDAPLEAIRYEGYGPGGVAFLIEALTDNRNRTAADLRAAFNKQGGNLGETGCVGWMFEQWGIVTVTAPRDEEAFLEALLAADVETYEILEEVAEVRCPVPALETVSETLKEHGYTVLDTESRWIPMNTVEITDEDTARRVLKLMDALENLDDIQSVATNVTMSDALMEAMYV.

The protein belongs to the TACO1 family.

It localises to the cytoplasm. The polypeptide is Probable transcriptional regulatory protein tll0175 (Thermosynechococcus vestitus (strain NIES-2133 / IAM M-273 / BP-1)).